A 113-amino-acid chain; its full sequence is UPF0122 protein MGAS10270_Spy1030 (113 aa).

It belongs to the UPF0122 family.

Might take part in the signal recognition particle (SRP) pathway. This is inferred from the conservation of its genetic proximity to ftsY/ffh. May be a regulatory protein. In Streptococcus pyogenes serotype M2 (strain MGAS10270), this protein is UPF0122 protein MGAS10270_Spy1030.